A 131-amino-acid chain; its full sequence is Thrombocorticin (131 aa).

An intrachain disulfide couples C3 to C111. The interval 28 to 60 (RNESVEVKDSNGNTVSRGSGSSSSGGTFTVINM) is disordered. The span at 37–54 (SNGNTVSRGSGSSSSGGT) shows a compositional bias: low complexity. The Pseudodomain-swapping motif motif lies at 117–131 (DFNDVFVLITGLVRG).

In terms of biological role, binds to fucose and mannose in a calcium-dependent manner (in vitro). Acts as an agonist for human thrombopoietin receptor MPL (in vitro). Binding of sugar-moieties may promote the interaction with human MPL on the cell surface (in vitro). Catalyzes MPL dimerization and activation, and modulates internalization of the receptor (in vitro). Exhibits proliferation activity in murine recombinant Ba/F3 cells expressing human MPL (Ba/F3-huMPL) (in vitro). Induces phosphorylation of STAT5 in recombinant Ba/F3-huMPL cells, possibly by stimulating MPL on the cell surface to transduce signals via Jak/STAT signaling pathway (in vitro). Does not aggregate rabbit erythrocytes, indicating absent lectin-like agglutination activity (in vitro). In Corticium sp. (Marine sponge), this protein is Thrombocorticin.